We begin with the raw amino-acid sequence, 545 residues long: CTP synthase (545 aa).

Residues 1 to 266 (MTKNYIFITG…DDYICNYFKL (266 aa)) form an amidoligase domain region. Residue Ser-14 participates in CTP binding. Ser-14 is a UTP binding site. Residues 15 to 20 (SLGKGI) and Asp-72 contribute to the ATP site. Mg(2+)-binding residues include Asp-72 and Glu-140. CTP-binding positions include 147–149 (DIE), 187–192 (KTKPTQ), and Lys-223. UTP-binding positions include 187 to 192 (KTKPTQ) and Lys-223. 239-241 (KDV) provides a ligand contact to ATP. In terms of domain architecture, Glutamine amidotransferase type-1 spans 291-543 (VIGIIGKYIK…IKSAGKHKKN (253 aa)). Gly-352 is an L-glutamine binding site. Cys-379 acts as the Nucleophile; for glutamine hydrolysis in catalysis. L-glutamine-binding positions include 380–383 (LGMQ), Glu-403, and Arg-471. Catalysis depends on residues His-516 and Glu-518.

Belongs to the CTP synthase family. Homotetramer.

The catalysed reaction is UTP + L-glutamine + ATP + H2O = CTP + L-glutamate + ADP + phosphate + 2 H(+). The enzyme catalyses L-glutamine + H2O = L-glutamate + NH4(+). It carries out the reaction UTP + NH4(+) + ATP = CTP + ADP + phosphate + 2 H(+). The protein operates within pyrimidine metabolism; CTP biosynthesis via de novo pathway; CTP from UDP: step 2/2. Allosterically activated by GTP, when glutamine is the substrate; GTP has no effect on the reaction when ammonia is the substrate. The allosteric effector GTP functions by stabilizing the protein conformation that binds the tetrahedral intermediate(s) formed during glutamine hydrolysis. Inhibited by the product CTP, via allosteric rather than competitive inhibition. In terms of biological role, catalyzes the ATP-dependent amination of UTP to CTP with either L-glutamine or ammonia as the source of nitrogen. Regulates intracellular CTP levels through interactions with the four ribonucleotide triphosphates. The polypeptide is CTP synthase (Buchnera aphidicola subsp. Acyrthosiphon pisum (strain 5A)).